A 190-amino-acid chain; its full sequence is Holliday junction branch migration complex subunit RuvA (190 aa).

The interval 1-65 is domain I; that stretch reads MIGNLRGIVD…ENVTQLYGFI (65 aa). Residues 66–143 are domain II; sequence SKEEQQCLRL…KLEINNNHFH (78 aa). The interval 144–147 is flexible linker; that stretch reads SISE. The segment at 147 to 190 is domain III; sequence EDALSALINLGYERTKAYDTIKKIEDESPNLDTKDIIRMALKTI.

This sequence belongs to the RuvA family. As to quaternary structure, homotetramer. Forms an RuvA(8)-RuvB(12)-Holliday junction (HJ) complex. HJ DNA is sandwiched between 2 RuvA tetramers; dsDNA enters through RuvA and exits via RuvB. An RuvB hexamer assembles on each DNA strand where it exits the tetramer. Each RuvB hexamer is contacted by two RuvA subunits (via domain III) on 2 adjacent RuvB subunits; this complex drives branch migration. In the full resolvosome a probable DNA-RuvA(4)-RuvB(12)-RuvC(2) complex forms which resolves the HJ.

It is found in the cytoplasm. The RuvA-RuvB-RuvC complex processes Holliday junction (HJ) DNA during genetic recombination and DNA repair, while the RuvA-RuvB complex plays an important role in the rescue of blocked DNA replication forks via replication fork reversal (RFR). RuvA specifically binds to HJ cruciform DNA, conferring on it an open structure. The RuvB hexamer acts as an ATP-dependent pump, pulling dsDNA into and through the RuvAB complex. HJ branch migration allows RuvC to scan DNA until it finds its consensus sequence, where it cleaves and resolves the cruciform DNA. The protein is Holliday junction branch migration complex subunit RuvA of Wolbachia pipientis subsp. Culex pipiens (strain wPip).